The primary structure comprises 211 residues: ATP phosphoribosyltransferase (211 aa).

The protein belongs to the ATP phosphoribosyltransferase family. Short subfamily. As to quaternary structure, heteromultimer composed of HisG and HisZ subunits.

It is found in the cytoplasm. The enzyme catalyses 1-(5-phospho-beta-D-ribosyl)-ATP + diphosphate = 5-phospho-alpha-D-ribose 1-diphosphate + ATP. Its pathway is amino-acid biosynthesis; L-histidine biosynthesis; L-histidine from 5-phospho-alpha-D-ribose 1-diphosphate: step 1/9. In terms of biological role, catalyzes the condensation of ATP and 5-phosphoribose 1-diphosphate to form N'-(5'-phosphoribosyl)-ATP (PR-ATP). Has a crucial role in the pathway because the rate of histidine biosynthesis seems to be controlled primarily by regulation of HisG enzymatic activity. In Bacillus cereus (strain B4264), this protein is ATP phosphoribosyltransferase.